A 482-amino-acid chain; its full sequence is UDP-glucose 6-dehydrogenase 2 (482 aa).

NAD(+) contacts are provided by residues G8–G13, D33, R38, V86–T90, S127–T128, and E163. Substrate contacts are provided by residues E159–E163, K218–L225, and R258–G271. The Nucleophile role is filled by C274. C274–K277 is an NAD(+) binding site. F336–K337 serves as a coordination point for substrate. Residue R344 participates in NAD(+) binding. S395 is modified (phosphoserine). R449 contacts substrate.

Belongs to the UDP-glucose/GDP-mannose dehydrogenase family.

The catalysed reaction is UDP-alpha-D-glucose + 2 NAD(+) + H2O = UDP-alpha-D-glucuronate + 2 NADH + 3 H(+). It functions in the pathway nucleotide-sugar biosynthesis; UDP-alpha-D-glucuronate biosynthesis; UDP-alpha-D-glucuronate from UDP-alpha-D-glucose: step 1/1. Involved in the biosynthesis of UDP-glucuronic acid (UDP-GlcA), providing nucleotide sugars for cell-wall polymers. This is UDP-glucose 6-dehydrogenase 2 (UGD2) from Oryza sativa subsp. japonica (Rice).